The following is a 348-amino-acid chain: MDDFFMIWLLPLLIIVGKTLLLLVVLLVLVAYLLYADRKIWAAVQLRRGPNVVGPWGLLQSFADLIKFVVKEPIIPAGANKGVFLLAPFVSATLALSTWAVIPVNEGWEVAKINVGLLYILAISSLEVYGVIMGGWASNSKYPFLGALRSAAQMVSYEVSIGFVLVTVILVSGSLDLTTIVHKQSYGIGTTLGFPFNSFLDWNWLVLFPMFIIFFISALAETNRPPFDLVEAESELVAGHMVEYSSTPYMLFFLGEYVAIVLMCALTTILFLGGWLPPLDVWWLNWVPGIIWFVLKVCFVFFWFAMVKAFVPRYRYDQLMRLGWKVFLPFSLAMVVITATFLKYTGFA.

A run of 8 helical transmembrane segments spans residues 7–27 (IWLLPLLIIVGKTLLLLVVLL), 82–102 (GVFLLAPFVSATLALSTWAVI), 115–135 (VGLLYILAISSLEVYGVIMGG), 161–181 (IGFVLVTVILVSGSLDLTTIV), 199–219 (FLDWNWLVLFPMFIIFFISAL), 251–271 (LFFLGEYVAIVLMCALTTILF), 287–307 (VPGIIWFVLKVCFVFFWFAMV), and 322–342 (LGWKVFLPFSLAMVVITATFL).

Belongs to the complex I subunit 1 family. NDH-1 is composed of 14 different subunits. Subunits NuoA, H, J, K, L, M, N constitute the membrane sector of the complex.

It localises to the cell inner membrane. The catalysed reaction is a quinone + NADH + 5 H(+)(in) = a quinol + NAD(+) + 4 H(+)(out). Its function is as follows. NDH-1 shuttles electrons from NADH, via FMN and iron-sulfur (Fe-S) centers, to quinones in the respiratory chain. The immediate electron acceptor for the enzyme in this species is believed to be ubiquinone. Couples the redox reaction to proton translocation (for every two electrons transferred, four hydrogen ions are translocated across the cytoplasmic membrane), and thus conserves the redox energy in a proton gradient. This subunit may bind ubiquinone. The sequence is that of NADH-quinone oxidoreductase subunit H from Bartonella quintana (strain Toulouse) (Rochalimaea quintana).